Here is a 1125-residue protein sequence, read N- to C-terminus: ATP-dependent DNA helicase Hel308 (1125 aa).

A Q motif motif is present at residues 1–29; the sequence is MKVDELPIDERIKRVIKERGIEELYPPQA. ATP contacts are provided by residues Gln-28 and 46–53; that span reads IPTASGKT. The Helicase ATP-binding domain occupies 33 to 197; that stretch reads KSGVLEGKNL…WLDASLVVSD (165 aa). The DEAH box motif lies at 145-148; sequence DEVH. A Helicase C-terminal domain is found at 226–440; it reads NWESLVLDAV…ELKERLESET (215 aa). The DOD-type homing endonuclease domain maps to 500–640; sequence LIGLWIAEGS…LQLLVASLGY (141 aa).

The protein belongs to the helicase family. Hel308 subfamily. In terms of assembly, monomer. This protein undergoes a protein self splicing that involves a post-translational excision of the intervening region (intein) followed by peptide ligation.

It carries out the reaction Couples ATP hydrolysis with the unwinding of duplex DNA by translocating in the 3'-5' direction.. The catalysed reaction is ATP + H2O = ADP + phosphate + H(+). In terms of biological role, DNA-dependent ATPase and 3'-5' DNA helicase that may be involved in repair of stalled replication forks. This Thermococcus kodakarensis (strain ATCC BAA-918 / JCM 12380 / KOD1) (Pyrococcus kodakaraensis (strain KOD1)) protein is ATP-dependent DNA helicase Hel308.